The sequence spans 345 residues: Phosphoribosylformylglycinamidine cyclo-ligase (345 aa).

It belongs to the AIR synthase family.

The protein resides in the cytoplasm. It catalyses the reaction 2-formamido-N(1)-(5-O-phospho-beta-D-ribosyl)acetamidine + ATP = 5-amino-1-(5-phospho-beta-D-ribosyl)imidazole + ADP + phosphate + H(+). It functions in the pathway purine metabolism; IMP biosynthesis via de novo pathway; 5-amino-1-(5-phospho-D-ribosyl)imidazole from N(2)-formyl-N(1)-(5-phospho-D-ribosyl)glycinamide: step 2/2. The polypeptide is Phosphoribosylformylglycinamidine cyclo-ligase (Enterobacter sp. (strain 638)).